The primary structure comprises 73 residues: UPF0346 protein SSP1318 (73 aa).

Belongs to the UPF0346 family.

The chain is UPF0346 protein SSP1318 from Staphylococcus saprophyticus subsp. saprophyticus (strain ATCC 15305 / DSM 20229 / NCIMB 8711 / NCTC 7292 / S-41).